The following is a 776-amino-acid chain: General transcription and DNA repair factor IIH helicase subunit XPD (776 aa).

The Helicase ATP-binding domain maps to 7–277 (DLLVYFPYSY…KKVDEKRLKD (271 aa)). Position 42–49 (42–49 (MPSGTGKT)) interacts with ATP. The [4Fe-4S] cluster site is built by Cys115, Cys133, Cys150, and Cys184. The DEAH box motif lies at 228–231 (DEAH). A disordered region spans residues 736–776 (HVEKQSTSKPPQQQNSAINSTITTSTTTTTTTSTISETHLT). Residues 742–754 (TSKPPQQQNSAIN) show a composition bias toward polar residues. Residues 755–776 (STITTSTTTTTTTSTISETHLT) show a composition bias toward low complexity.

Belongs to the helicase family. RAD3/XPD subfamily. As to quaternary structure, component of the 7-subunit TFIIH core complex composed of XPB/repB, XPD/repD, gtf2h1, gtf2h2, gtf2h3, gtf2h4 and gtf2h5, which is active in NER. The core complex associates with the 3-subunit CDK-activating kinase (CAK) module composed of cycH/cyclin H, cdk7 and mnat1 to form the 10-subunit holoenzyme (holo-TFIIH) active in transcription. The cofactor is Mg(2+). It depends on [4Fe-4S] cluster as a cofactor.

It is found in the nucleus. It catalyses the reaction Couples ATP hydrolysis with the unwinding of duplex DNA at the replication fork by translocating in the 5'-3' direction. This creates two antiparallel DNA single strands (ssDNA). The leading ssDNA polymer is the template for DNA polymerase III holoenzyme which synthesizes a continuous strand.. It carries out the reaction ATP + H2O = ADP + phosphate + H(+). Functionally, ATP-dependent 5'-3' DNA helicase, component of the general transcription and DNA repair factor IIH (TFIIH) core complex, which is involved in general and transcription-coupled nucleotide excision repair (NER) of damaged DNA and, when complexed to CDK-activating kinase (CAK), in transcription by RNA polymerase II. In NER, TFIIH acts by opening DNA around the lesion to allow the excision of the damaged oligonucleotide and its replacement by a new DNA fragment. The ATP-dependent helicase activity of XPD/repD is required for DNA opening. In transcription, TFIIH has an essential role in transcription initiation. When the pre-initiation complex (PIC) has been established, TFIIH is required for promoter opening and promoter escape. Phosphorylation of the C-terminal tail (CTD) of the largest subunit of RNA polymerase II by the kinase module CAK controls the initiation of transcription. XPD/repD acts by forming a bridge between CAK and the core-TFIIH complex. This is General transcription and DNA repair factor IIH helicase subunit XPD from Dictyostelium discoideum (Social amoeba).